Reading from the N-terminus, the 954-residue chain is Glycine dehydrogenase (decarboxylating) (954 aa).

K699 is subject to N6-(pyridoxal phosphate)lysine.

Belongs to the GcvP family. The glycine cleavage system is composed of four proteins: P, T, L and H. The cofactor is pyridoxal 5'-phosphate.

It carries out the reaction N(6)-[(R)-lipoyl]-L-lysyl-[glycine-cleavage complex H protein] + glycine + H(+) = N(6)-[(R)-S(8)-aminomethyldihydrolipoyl]-L-lysyl-[glycine-cleavage complex H protein] + CO2. The glycine cleavage system catalyzes the degradation of glycine. The P protein binds the alpha-amino group of glycine through its pyridoxal phosphate cofactor; CO(2) is released and the remaining methylamine moiety is then transferred to the lipoamide cofactor of the H protein. This chain is Glycine dehydrogenase (decarboxylating), found in Nitrobacter winogradskyi (strain ATCC 25391 / DSM 10237 / CIP 104748 / NCIMB 11846 / Nb-255).